Reading from the N-terminus, the 354-residue chain is Acyl-CoA-binding domain-containing protein 2 (354 aa).

The chain crosses the membrane as a helical; Signal-anchor span at residues 11 to 31 (VILGLIFSYLLAKLISIVVTF). Positions 75 to 96 (AEQGSSRSDSVAGDDSEEDDDW) are disordered. Positions 86 to 96 (AGDDSEEDDDW) are enriched in acidic residues. The 91-residue stretch at 104–194 (LDEAFSAATL…VTQLYPTWLD (91 aa)) folds into the ACB domain. Residues 136–140 (YGLYK), Lys-162, and Tyr-181 each bind an acyl-CoA. ANK repeat units lie at residues 265-294 (EGRTPLHWAIDRGHLNIAKVLVDKNADVNA) and 298-327 (EGQTPLHYAVVCDREAIAEFLVKQNANTAA).

It belongs to the ACBP family. Interacts (via ankyrin repeats) with HIPP26 and the ethylene-responsive element-binding proteins RAP2-3/EBP and RAP2-12. Interacts with CSE. As to expression, mostly expressed in roots and flowers, and, to a lower extent, in stems, pods and leaves (at protein level).

It localises to the cell membrane. The protein localises to the endoplasmic reticulum membrane. Its subcellular location is the peroxisome membrane. Its function is as follows. Binds medium- and long-chain acyl-CoA esters with very high affinity. Can interact in vitro with palmitoyl-CoA, but not with oleoyl-CoA. Binds to lead ions (Pb). May function as an intracellular carrier of acyl-CoA esters. Required for proper phospholipid and, to a lower extent, galactolipid composition. The polypeptide is Acyl-CoA-binding domain-containing protein 2 (ACBP2) (Arabidopsis thaliana (Mouse-ear cress)).